A 524-amino-acid chain; its full sequence is MEMDMDTIRKAIAATIFALVMAWAWRVLDWAWFTPKRIEKRLRQQGFRGNPYRFLVGDVKESGKMHQEALSKPMEFNNDIVPRLMPHINHTINTYGRNSFTWMGRIPRIHVMEPELIKEVLTHSSKYQKNFDVHNPLVKFLLTGVGSFEGAKWSKHRRIISPAFTLEKLKSMLPAFAICYHDMLTKWEKIAEKQGSHEVDIFPTFDVLTSDVISKVAFGSTYEEGGKIFRLLKELMDLTIDCMRDVYIPGWSYLPTKRNKRMKEINKEITDMLRFIINKRMKALKAGEPGEDDLLGVLLESNIQEIQKQGNKKDGGMSINDVIEECKLFYFAGQETTGVLLTWTTILLSKHPEWQERAREEVLQAFGKNKPEFERLNHLKYVSMILYEVLRLYPPVIDLTKIVHKDTKLGSYTIPAGTQVMLPTVMLHREKSIWGEDAMEFNPMRFVDGVANATKNNVTYLPFSWGPRVCLGQNFALLQAKLGLAMILQRFKFDVAPSYVHAPFTILTVQPQFGSHVIYKKLES.

At 1 to 11 (MEMDMDTIRKA) the chain is on the lumenal side. Residues 12-32 (IAATIFALVMAWAWRVLDWAW) form a helical membrane-spanning segment. Residues 33–524 (FTPKRIEKRL…SHVIYKKLES (492 aa)) are Cytoplasmic-facing. Heme is bound at residue Cys470.

The protein belongs to the cytochrome P450 family. Requires heme as cofactor. Upper and lower leaf epidermis.

The protein resides in the endoplasmic reticulum membrane. It catalyses the reaction loganin + reduced [NADPH--hemoprotein reductase] + O2 = secologanin + oxidized [NADPH--hemoprotein reductase] + 2 H2O + H(+). The catalysed reaction is secologanin + reduced [NADPH--hemoprotein reductase] + O2 = secoxyloganin + oxidized [NADPH--hemoprotein reductase] + H2O + 2 H(+). Its pathway is alkaloid biosynthesis; secologanin biosynthesis. In terms of biological role, component of the seco-iridoid and derivatives monoterpenoid indole alkaloids (MIAs, e.g. secologanin) biosynthesis pathway. Catalyzes the conversion of loganin into secologanin. Catalyzes the conversion of secologanin into secoxyloganin. This is Secologanin synthase 1 from Catharanthus roseus (Madagascar periwinkle).